Here is a 657-residue protein sequence, read N- to C-terminus: L-glutamate oxidase precursor (657 aa).

The signal sequence occupies residues Met1–Arg12. Residues Glu86, Ala87, Arg95, Met120, Arg121, Met350, Glu639, Trp647, and Ile648 each contribute to the FAD site.

This sequence belongs to the flavin monoamine oxidase family. LGOX subfamily. As to quaternary structure, the mature enzyme is a heterohexamer composed of 2 alpha chains, 2 beta chains and 2 gamma chains (alpha2beta2gamma2). It depends on FAD as a cofactor. In terms of processing, the precursor form is proteolytically cleaved by an endopeptidase into alpha, beta and gamma chains, which form the stable mature enzyme.

The protein resides in the secreted. The enzyme catalyses L-glutamate + O2 + H2O = H2O2 + 2-oxoglutarate + NH4(+). With respect to regulation, proteinase K-treated enzyme exhibits improved affinity for the substrate, increased activity and increased thermostability. Its function is as follows. Catalyzes the oxidative deamination of L-glutamate to 2-ketoglutarate along with the production of ammonia and hydrogen peroxide. Exhibits strict specificity for L-glutamate, and shows only very weak activity with L-glutamine. The chain is L-glutamate oxidase precursor from Streptomyces diastatochromogenes.